We begin with the raw amino-acid sequence, 192 residues long: Superoxide dismutase [Fe] (192 aa).

The Fe cation site is built by His-27, His-74, Asp-157, and His-161.

This sequence belongs to the iron/manganese superoxide dismutase family. In terms of assembly, homodimer. Fe cation is required as a cofactor.

The enzyme catalyses 2 superoxide + 2 H(+) = H2O2 + O2. Functionally, destroys superoxide anion radicals which are normally produced within the cells and which are toxic to biological systems. The chain is Superoxide dismutase [Fe] (sodB) from Bordetella pertussis (strain Tohama I / ATCC BAA-589 / NCTC 13251).